The primary structure comprises 261 residues: Small ribosomal subunit protein mS23 (261 aa).

Residues 234 to 261 (NPSESWATDEKDPKKNDDIEEDVEEIKL) form a disordered region. Basic and acidic residues predominate over residues 241 to 250 (TDEKDPKKND). A compositionally biased stretch (acidic residues) spans 251-261 (DIEEDVEEIKL).

It belongs to the mitochondrion-specific ribosomal protein mS23 family. As to quaternary structure, component of the mitochondrial small ribosomal subunit.

It localises to the mitochondrion. This chain is Small ribosomal subunit protein mS23 (RSM25), found in Vanderwaltozyma polyspora (strain ATCC 22028 / DSM 70294 / BCRC 21397 / CBS 2163 / NBRC 10782 / NRRL Y-8283 / UCD 57-17) (Kluyveromyces polysporus).